A 168-amino-acid polypeptide reads, in one-letter code: Photosystem I assembly protein Ycf3 (168 aa).

3 TPR repeats span residues 35–68 (AFTYYRDGMSAQSEGEYAEALQNYYEAMRLEIDP), 72–105 (SYILYNIGLIHTSNGEHAKALEYYFQALERNPSL), and 120–153 (GEQAIQQGDSETSEAWFNQAADYWKQAIALAPSN).

It belongs to the Ycf3 family.

The protein localises to the plastid. It localises to the chloroplast thylakoid membrane. Functionally, essential for the assembly of the photosystem I (PSI) complex. May act as a chaperone-like factor to guide the assembly of the PSI subunits. The chain is Photosystem I assembly protein Ycf3 from Physcomitrium patens (Spreading-leaved earth moss).